Consider the following 292-residue polypeptide: Protein LRATD1 (292 aa).

Ser-38 is subject to Phosphoserine. The 96-residue stretch at 133 to 228 (PATEQPAPAP…CRFGKREFKA (96 aa)) folds into the LRAT domain.

It belongs to the LRATD family.

The protein localises to the cytoplasm. In terms of biological role, may play a role in cell morphology and motility. The sequence is that of Protein LRATD1 from Mus musculus (Mouse).